The chain runs to 309 residues: MAMVERPRPEWASYHNCNSNSCQDLGNSVLLLLGLIICINISINIVTLLWSRFRGVLYQVFHDTICEKEAPKSSLLRKQTQPPKKQSSPAVHLRCTMDPVMMTVSPPPAHRHRRRGSPTRCAHCPVAWAPDTDDEKPHQYPAICSYHWDVPEDWEGFQHTQGTWVPWSQDAPESPPQTIRFQPTVEERPLKTGIWSELGLRAYVYPVNPPPPSPEAPSHKNGGEGAVPEAEAAQYQPVPAPTLGPAVIPEFSRHRSSGRIVYDARDMRRRLRELTREVEALSGCYPLASGSSTAEETSKNWVYRSLTGR.

A helical membrane pass occupies residues 29–49; sequence VLLLLGLIICINISINIVTLL. The tract at residues 209-231 is disordered; the sequence is PPPPSPEAPSHKNGGEGAVPEAE. Positions 259 to 285 form a coiled coil; it reads RIVYDARDMRRRLRELTREVEALSGCY.

The protein localises to the membrane. It localises to the cytoplasm. Functionally, required for proper cytoplasm removal during spermatogenesis. The chain is Spermatid maturation protein 1 (SPEM1) from Homo sapiens (Human).